The following is an 862-amino-acid chain: Probable linoleate 9S-lipoxygenase 5 (862 aa).

A PLAT domain is found at Asn-36–Ala-161. The Lipoxygenase domain maps to Ala-164–Ile-862. Positions 523, 528, 714, 718, and 862 each coordinate Fe cation.

Belongs to the lipoxygenase family. Monomer. Requires Fe cation as cofactor. Not detected in leaves, stems, flowers, roots, tubers and stolons during normal growth and development.

It localises to the cytoplasm. It catalyses the reaction (9Z,12Z)-octadecadienoate + O2 = (9S)-hydroperoxy-(10E,12Z)-octadecadienoate. It functions in the pathway lipid metabolism; oxylipin biosynthesis. Functionally, plant lipoxygenases may be involved in a number of diverse aspects of plant physiology including growth and development, pest resistance, and senescence or responses to wounding. May contribute to cell death during the hypersensitive response (HR) by the massive production of free fatty acid hydroperoxides. Catalyzes the hydroperoxidation of lipids containing a cis,cis-1,4-pentadiene structure. The chain is Probable linoleate 9S-lipoxygenase 5 (LOX1.5) from Solanum tuberosum (Potato).